The sequence spans 402 residues: NADH-quinone oxidoreductase subunit D (402 aa).

The protein belongs to the complex I 49 kDa subunit family. As to quaternary structure, NDH-1 is composed of 14 different subunits. Subunits NuoB, C, D, E, F, and G constitute the peripheral sector of the complex.

It localises to the cell inner membrane. It catalyses the reaction a quinone + NADH + 5 H(+)(in) = a quinol + NAD(+) + 4 H(+)(out). Functionally, NDH-1 shuttles electrons from NADH, via FMN and iron-sulfur (Fe-S) centers, to quinones in the respiratory chain. The immediate electron acceptor for the enzyme in this species is believed to be ubiquinone. Couples the redox reaction to proton translocation (for every two electrons transferred, four hydrogen ions are translocated across the cytoplasmic membrane), and thus conserves the redox energy in a proton gradient. This chain is NADH-quinone oxidoreductase subunit D, found in Cereibacter sphaeroides (strain ATCC 17025 / ATH 2.4.3) (Rhodobacter sphaeroides).